We begin with the raw amino-acid sequence, 285 residues long: Acetyl-coenzyme A carboxylase carboxyl transferase subunit beta (285 aa).

Positions 29-285 (IMTKCPKCKK…ILKIHQEVSN (257 aa)) constitute a CoA carboxyltransferase N-terminal domain. Positions 33, 36, 52, and 55 each coordinate Zn(2+). The C4-type zinc-finger motif lies at 33–55 (CPKCKKIMYTKELNENLNVCFNC).

The protein belongs to the AccD/PCCB family. In terms of assembly, acetyl-CoA carboxylase is a heterohexamer composed of biotin carboxyl carrier protein (AccB), biotin carboxylase (AccC) and two subunits each of ACCase subunit alpha (AccA) and ACCase subunit beta (AccD). The cofactor is Zn(2+).

The protein resides in the cytoplasm. The enzyme catalyses N(6)-carboxybiotinyl-L-lysyl-[protein] + acetyl-CoA = N(6)-biotinyl-L-lysyl-[protein] + malonyl-CoA. Its pathway is lipid metabolism; malonyl-CoA biosynthesis; malonyl-CoA from acetyl-CoA: step 1/1. In terms of biological role, component of the acetyl coenzyme A carboxylase (ACC) complex. Biotin carboxylase (BC) catalyzes the carboxylation of biotin on its carrier protein (BCCP) and then the CO(2) group is transferred by the transcarboxylase to acetyl-CoA to form malonyl-CoA. This chain is Acetyl-coenzyme A carboxylase carboxyl transferase subunit beta, found in Staphylococcus epidermidis (strain ATCC 12228 / FDA PCI 1200).